Consider the following 245-residue polypeptide: tRNA (guanine-N(1)-)-methyltransferase (245 aa).

S-adenosyl-L-methionine contacts are provided by residues glycine 111 and 131 to 136; that span reads MGDYVL.

This sequence belongs to the RNA methyltransferase TrmD family. Homodimer.

The protein localises to the cytoplasm. It carries out the reaction guanosine(37) in tRNA + S-adenosyl-L-methionine = N(1)-methylguanosine(37) in tRNA + S-adenosyl-L-homocysteine + H(+). Specifically methylates guanosine-37 in various tRNAs. The protein is tRNA (guanine-N(1)-)-methyltransferase of Staphylococcus aureus (strain MRSA252).